A 418-amino-acid chain; its full sequence is Tubulin alpha chain (418 aa).

GTP-binding residues include glutamine 11, glutamate 71, serine 140, glycine 144, threonine 179, asparagine 206, and asparagine 228. Residue glutamate 71 coordinates Mg(2+). The active site involves glutamate 255.

It belongs to the tubulin family. Dimer of alpha and beta chains. A typical microtubule is a hollow water-filled tube with an outer diameter of 25 nm and an inner diameter of 15 nM. Alpha-beta heterodimers associate head-to-tail to form protofilaments running lengthwise along the microtubule wall with the beta-tubulin subunit facing the microtubule plus end conferring a structural polarity. Microtubules usually have 13 protofilaments but different protofilament numbers can be found in some organisms and specialized cells. Mg(2+) serves as cofactor.

Its subcellular location is the cytoplasm. It is found in the cytoskeleton. It carries out the reaction GTP + H2O = GDP + phosphate + H(+). Tubulin is the major constituent of microtubules, a cylinder consisting of laterally associated linear protofilaments composed of alpha- and beta-tubulin heterodimers. Microtubules grow by the addition of GTP-tubulin dimers to the microtubule end, where a stabilizing cap forms. Below the cap, tubulin dimers are in GDP-bound state, owing to GTPase activity of alpha-tubulin. This Ajellomyces capsulatus (Darling's disease fungus) protein is Tubulin alpha chain (TUB1).